Consider the following 185-residue polypeptide: Photosystem I assembly protein Ycf4 (185 aa).

The next 2 helical transmembrane spans lie at 24–44 (YIIG…SISS) and 66–86 (IIMG…WYLV).

The protein belongs to the Ycf4 family.

It is found in the cellular thylakoid membrane. Seems to be required for the assembly of the photosystem I complex. This is Photosystem I assembly protein Ycf4 from Prochlorococcus marinus (strain MIT 9301).